A 66-amino-acid polypeptide reads, in one-letter code: U10-theraphotoxin-Cg1a 3 (66 aa).

An N-terminal signal peptide occupies residues 1–21; that stretch reads MKTSVLFVIFGLALLFCLSFA. Residues 22–29 constitute a propeptide that is removed on maturation; that stretch reads DELEDTGR. Intrachain disulfides connect Cys-31–Cys-46, Cys-38–Cys-51, and Cys-45–Cys-58.

This sequence belongs to the neurotoxin 10 (Hwtx-1) family. 29 (Jztx-13) subfamily. In terms of tissue distribution, expressed by the venom gland.

It is found in the secreted. In terms of biological role, probable ion channel inhibitor. This Chilobrachys guangxiensis (Chinese earth tiger tarantula) protein is U10-theraphotoxin-Cg1a 3.